The following is a 180-amino-acid chain: Adenine phosphoribosyltransferase (180 aa).

It belongs to the purine/pyrimidine phosphoribosyltransferase family. As to quaternary structure, homodimer.

The protein resides in the cytoplasm. The enzyme catalyses AMP + diphosphate = 5-phospho-alpha-D-ribose 1-diphosphate + adenine. Its pathway is purine metabolism; AMP biosynthesis via salvage pathway; AMP from adenine: step 1/1. Catalyzes a salvage reaction resulting in the formation of AMP, that is energically less costly than de novo synthesis. The chain is Adenine phosphoribosyltransferase from Rhizobium johnstonii (strain DSM 114642 / LMG 32736 / 3841) (Rhizobium leguminosarum bv. viciae).